The following is a 140-amino-acid chain: Peptide methionine sulfoxide reductase MsrB (140 aa).

In terms of domain architecture, MsrB spans 10–132; sequence EEDWKSVLTP…NSVSLGFTKE (123 aa). The Zn(2+) site is built by C49, C52, C98, and C101. C121 (nucleophile) is an active-site residue.

This sequence belongs to the MsrB Met sulfoxide reductase family. Requires Zn(2+) as cofactor.

The enzyme catalyses L-methionyl-[protein] + [thioredoxin]-disulfide + H2O = L-methionyl-(R)-S-oxide-[protein] + [thioredoxin]-dithiol. The chain is Peptide methionine sulfoxide reductase MsrB from Methanosarcina mazei (strain ATCC BAA-159 / DSM 3647 / Goe1 / Go1 / JCM 11833 / OCM 88) (Methanosarcina frisia).